The following is a 126-amino-acid chain: Fluoride-specific ion channel FluC (126 aa).

Transmembrane regions (helical) follow at residues 4 to 24 (SILAVGIGGALGSLFRWFLGI), 35 to 55 (LGTFAANVIAGYVIGVAVAGF), 68 to 88 (FVITGLMGGLSTFSTFSAEVV), and 103 to 123 (IVIHVGASLVMTILGIATVSL). Gly-75 and Ser-78 together coordinate Na(+).

It belongs to the fluoride channel Fluc/FEX (TC 1.A.43) family.

The protein localises to the cell inner membrane. The enzyme catalyses fluoride(in) = fluoride(out). Na(+) is not transported, but it plays an essential structural role and its presence is essential for fluoride channel function. Its function is as follows. Fluoride-specific ion channel. Important for reducing fluoride concentration in the cell, thus reducing its toxicity. The chain is Fluoride-specific ion channel FluC from Paraburkholderia xenovorans (strain LB400).